The primary structure comprises 130 residues: Small ribosomal subunit protein uS8 (130 aa).

The protein belongs to the universal ribosomal protein uS8 family. Part of the 30S ribosomal subunit. Contacts proteins S5 and S12.

Its function is as follows. One of the primary rRNA binding proteins, it binds directly to 16S rRNA central domain where it helps coordinate assembly of the platform of the 30S subunit. The polypeptide is Small ribosomal subunit protein uS8 (Vibrio parahaemolyticus serotype O3:K6 (strain RIMD 2210633)).